The chain runs to 89 residues: Small ribosomal subunit protein uS15 (89 aa).

Positions 1-24 (MSLDTTEKQQLINSHQTHATDTGS) are disordered. A compositionally biased stretch (polar residues) spans 8–24 (KQQLINSHQTHATDTGS).

It belongs to the universal ribosomal protein uS15 family. Part of the 30S ribosomal subunit. Forms a bridge to the 50S subunit in the 70S ribosome, contacting the 23S rRNA.

In terms of biological role, one of the primary rRNA binding proteins, it binds directly to 16S rRNA where it helps nucleate assembly of the platform of the 30S subunit by binding and bridging several RNA helices of the 16S rRNA. Its function is as follows. Forms an intersubunit bridge (bridge B4) with the 23S rRNA of the 50S subunit in the ribosome. The sequence is that of Small ribosomal subunit protein uS15 from Synechococcus sp. (strain CC9311).